Reading from the N-terminus, the 549-residue chain is Oxygen-dependent choline dehydrogenase (549 aa).

Residue 4-33 (DYVIVGSGSAGSAIAYRLSEDGRYSVIVIE) participates in FAD binding. H465 acts as the Proton acceptor in catalysis. The tract at residues 528-549 (KTPLPRSNQEPWVNPRAAVSDR) is disordered.

This sequence belongs to the GMC oxidoreductase family. FAD is required as a cofactor.

It carries out the reaction choline + A = betaine aldehyde + AH2. The catalysed reaction is betaine aldehyde + NAD(+) + H2O = glycine betaine + NADH + 2 H(+). Its pathway is amine and polyamine biosynthesis; betaine biosynthesis via choline pathway; betaine aldehyde from choline (cytochrome c reductase route): step 1/1. Its function is as follows. Involved in the biosynthesis of the osmoprotectant glycine betaine. Catalyzes the oxidation of choline to betaine aldehyde and betaine aldehyde to glycine betaine at the same rate. In Agrobacterium fabrum (strain C58 / ATCC 33970) (Agrobacterium tumefaciens (strain C58)), this protein is Oxygen-dependent choline dehydrogenase.